The sequence spans 201 residues: ATP-dependent Clp protease proteolytic subunit (201 aa).

Catalysis depends on S98, which acts as the Nucleophile. Residue H123 is part of the active site.

The protein belongs to the peptidase S14 family. In terms of assembly, fourteen ClpP subunits assemble into 2 heptameric rings which stack back to back to give a disk-like structure with a central cavity, resembling the structure of eukaryotic proteasomes.

Its subcellular location is the cytoplasm. It catalyses the reaction Hydrolysis of proteins to small peptides in the presence of ATP and magnesium. alpha-casein is the usual test substrate. In the absence of ATP, only oligopeptides shorter than five residues are hydrolyzed (such as succinyl-Leu-Tyr-|-NHMec, and Leu-Tyr-Leu-|-Tyr-Trp, in which cleavage of the -Tyr-|-Leu- and -Tyr-|-Trp bonds also occurs).. In terms of biological role, cleaves peptides in various proteins in a process that requires ATP hydrolysis. Has a chymotrypsin-like activity. Plays a major role in the degradation of misfolded proteins. The polypeptide is ATP-dependent Clp protease proteolytic subunit (Desulfatibacillum aliphaticivorans).